Consider the following 153-residue polypeptide: UPF0756 membrane protein Pjdr2_2290 (153 aa).

5 helical membrane passes run Leu6–Ala26, Leu50–Val70, Leu75–Ala95, Met111–Val131, and Gly132–Gly152.

It belongs to the UPF0756 family.

It localises to the cell membrane. In Paenibacillus sp. (strain JDR-2), this protein is UPF0756 membrane protein Pjdr2_2290.